Reading from the N-terminus, the 379-residue chain is 1-deoxy-D-xylulose 5-phosphate reductoisomerase (379 aa).

NADPH contacts are provided by Thr10, Gly11, Ser12, Ile13, Gly36, Asn38, and Asn121. A 1-deoxy-D-xylulose 5-phosphate-binding site is contributed by Lys122. Glu123 is an NADPH binding site. Asp147 provides a ligand contact to Mn(2+). 1-deoxy-D-xylulose 5-phosphate-binding residues include Ser148, Glu149, Ser173, and His196. Glu149 lines the Mn(2+) pocket. An NADPH-binding site is contributed by Gly202. The 1-deoxy-D-xylulose 5-phosphate site is built by Ser209, Asn214, Lys215, and Glu218. Glu218 provides a ligand contact to Mn(2+).

Belongs to the DXR family. The cofactor is Mg(2+). It depends on Mn(2+) as a cofactor.

It carries out the reaction 2-C-methyl-D-erythritol 4-phosphate + NADP(+) = 1-deoxy-D-xylulose 5-phosphate + NADPH + H(+). The protein operates within isoprenoid biosynthesis; isopentenyl diphosphate biosynthesis via DXP pathway; isopentenyl diphosphate from 1-deoxy-D-xylulose 5-phosphate: step 1/6. Its function is as follows. Catalyzes the NADPH-dependent rearrangement and reduction of 1-deoxy-D-xylulose-5-phosphate (DXP) to 2-C-methyl-D-erythritol 4-phosphate (MEP). This is 1-deoxy-D-xylulose 5-phosphate reductoisomerase from Shouchella clausii (strain KSM-K16) (Alkalihalobacillus clausii).